Reading from the N-terminus, the 174-residue chain is Transcription factor bHLH168 (174 aa).

Positions 14–63 (SLREQRNLREKERRMRMKHLFSILSSHVSPTRRLPVPQLIDQAVSYMIQL) constitute a bHLH domain.

It belongs to the bHLH protein family.

The protein resides in the nucleus. This Arabidopsis thaliana (Mouse-ear cress) protein is Transcription factor bHLH168.